Here is a 249-residue protein sequence, read N- to C-terminus: Cytoplasmic envelopment protein 1 (249 aa).

It belongs to the herpesviridae cytoplasmic envelopment protein 1 family.

The protein resides in the virion. It localises to the virion tegument. The protein localises to the host cytoplasm. Its subcellular location is the host Golgi apparatus. In terms of biological role, plays a critical role in cytoplasmic virus egress. Participates in the final step of tegumentation and envelope acquisition within the host cytoplasm. The chain is Cytoplasmic envelopment protein 1 (UL103) from Homo sapiens (Human).